A 33-amino-acid polypeptide reads, in one-letter code: Protamine-1A (33 aa).

The tract at residues 1 to 33 is disordered; that stretch reads PRRRRSSSRPVRRRRRPRRVSRRRRRRGGRRRR.

In terms of tissue distribution, testis.

The protein resides in the nucleus. It is found in the chromosome. In terms of biological role, protamines substitute for histones in the chromatin of sperm during the haploid phase of spermatogenesis. They compact sperm DNA into a highly condensed, stable and inactive complex. This chain is Protamine-1A, found in Oncorhynchus mykiss (Rainbow trout).